The primary structure comprises 644 residues: Threonine--tRNA ligase (644 aa).

Residues 1–61 (MKVSIEGSVV…TACETLEPVY (61 aa)) form the TGS domain. The segment at 241–532 (DHRKLGTQLD…LTEHFAGAFP (292 aa)) is catalytic. Cys-333, His-384, and His-509 together coordinate Zn(2+).

The protein belongs to the class-II aminoacyl-tRNA synthetase family. As to quaternary structure, homodimer. Requires Zn(2+) as cofactor.

Its subcellular location is the cytoplasm. The catalysed reaction is tRNA(Thr) + L-threonine + ATP = L-threonyl-tRNA(Thr) + AMP + diphosphate + H(+). In terms of biological role, catalyzes the attachment of threonine to tRNA(Thr) in a two-step reaction: L-threonine is first activated by ATP to form Thr-AMP and then transferred to the acceptor end of tRNA(Thr). Also edits incorrectly charged L-seryl-tRNA(Thr). The polypeptide is Threonine--tRNA ligase (Oleidesulfovibrio alaskensis (strain ATCC BAA-1058 / DSM 17464 / G20) (Desulfovibrio alaskensis)).